Here is a 786-residue protein sequence, read N- to C-terminus: LPS-assembly protein LptD (786 aa).

The signal sequence occupies residues 1-39; it reads MPPKPLFPNVFPGDGAPRKRRLALALLAVPGLVPAVSYA. The segment at 767–786 is disordered; the sequence is PGYTPLPPPPPPMSRFSNYE. The span at 770–779 shows a compositional bias: pro residues; that stretch reads TPLPPPPPPM.

This sequence belongs to the LptD family. Component of the lipopolysaccharide transport and assembly complex. Interacts with LptE and LptA.

The protein localises to the cell outer membrane. Functionally, together with LptE, is involved in the assembly of lipopolysaccharide (LPS) at the surface of the outer membrane. This chain is LPS-assembly protein LptD, found in Burkholderia lata (strain ATCC 17760 / DSM 23089 / LMG 22485 / NCIMB 9086 / R18194 / 383).